The sequence spans 421 residues: L-Ala-D/L-amino acid epimerase (421 aa).

Substrate contacts are provided by residues Thr193 and 218–220; that span reads KLK. Mg(2+)-binding residues include Asp247, Glu275, and Asp304. Substrate-binding positions include Lys328 and 380–382; that span reads DLD.

The protein belongs to the mandelate racemase/muconate lactonizing enzyme family. Requires Mg(2+) as cofactor.

In terms of biological role, catalyzes the epimerization of various hydrophobic and polar dipeptides. Has epimerase activity with L-Ala-L-Ala, L-Ala-L-Ser, L-Ala-L-Thr and L-Ala-L-Trp (in vitro). This is L-Ala-D/L-amino acid epimerase from Populus trichocarpa (Western balsam poplar).